Reading from the N-terminus, the 1347-residue chain is Spermatogenesis-associated protein 31A1 (1347 aa).

Residues 23–43 (PWVLDIFLTLVFALGFFFLLL) form a helical membrane-spanning segment. Disordered regions lie at residues 55–89 (PSPS…ECPR), 106–235 (GPHL…STLI), 373–397 (EQDT…GPQK), 628–658 (DESP…EAQK), 899–955 (PRGI…REAV), and 1085–1160 (HEEP…PPSV). Basic residues predominate over residues 60-82 (GKRKCPVGRRRRPRGRMKNHSLR). The segment covering 165 to 178 (LASTPSPGPMTTSV) has biased composition (polar residues). Over residues 198-222 (PEPPALFPHPPHTPDPLACSPPPPK) the composition is skewed to pro residues. Polar residues-rich tracts occupy residues 631 to 651 (PGTS…STGE) and 927 to 948 (LTYS…SSKA). 2 stretches are compositionally biased toward basic and acidic residues: residues 1108-1127 (HKSE…RLEG) and 1137-1146 (RKTEDTHQDE).

The protein belongs to the SPATA31 family.

The protein localises to the membrane. Its function is as follows. May play a role in spermatogenesis. This Homo sapiens (Human) protein is Spermatogenesis-associated protein 31A1.